A 625-amino-acid chain; its full sequence is Somatic embryogenesis receptor kinase 1 (625 aa).

Positions 1-26 (MESSYVVFILLSLILLPNHSLWLASA) are cleaved as a signal peptide. The Extracellular portion of the chain corresponds to 27–238 (NLEGDALHTL…STPSGYGITG (212 aa)). The cysteines at positions 58 and 65 are disulfide-linked. 2 leucine-rich repeat receptor-like protein kinase binding regions span residues 59–78 (TWFH…DLGN) and 97–102 (YLELYS). Position 61 to 62 (61 to 62 (FH)) interacts with brassinolide. 4 LRR repeats span residues 92 to 116 (LKNL…LGNL), 118 to 140 (NLVS…LGKL), 141 to 164 (SKLR…LTNI), and 165 to 189 (TTLQ…SFSL). N104 and N115 each carry an N-linked (GlcNAc...) asparagine glycan. 2 leucine-rich repeat receptor-like protein kinase binding regions span residues 123–126 (DLYL) and 145–147 (FLR). N150, N163, and N184 each carry an N-linked (GlcNAc...) asparagine glycan. The segment at 171–194 (DLSNNRLSGSVPDNGSFSLFTPIS) is leucine-rich repeat receptor-like protein kinase binding. C202 and C210 are oxidised to a cystine. A helical transmembrane segment spans residues 239 to 259 (AIAGGVAAGAALLFAAPAIAF). Topologically, residues 260-625 (AWWRRRKPLD…LHAVELSGPR (366 aa)) are cytoplasmic. 3 positions are modified to phosphoserine: S291, S299, and S303. Residues 302–589 (FSNKNILGRG…GLAEKWDEWQ (288 aa)) form the Protein kinase domain. 308-316 (LGRGGFGKV) serves as a coordination point for ATP. T325 carries the phosphothreonine modification. An ATP-binding site is contributed by K330. Phosphothreonine is present on residues T337 and T346. Phosphoserine is present on residues S352, S383, S386, and S394. Residue T402 is modified to Phosphothreonine. A Phosphoserine modification is found at S415. D429 serves as the catalytic Proton acceptor. Y456 bears the Phosphotyrosine mark. 4 positions are modified to phosphothreonine: T459, T462, T463, and T468. Phosphotyrosine is present on Y476. Residue S478 is modified to Phosphoserine. The residue at position 479 (T479) is a Phosphothreonine. S483 is subject to Phosphoserine. T541 carries the phosphothreonine modification. The residue at position 543 (Y543) is a Phosphotyrosine. T559 is subject to Phosphothreonine. Phosphoserine occurs at positions 606 and 612. T613 bears the Phosphothreonine mark. Y614 bears the Phosphotyrosine mark. S622 bears the Phosphoserine mark.

It belongs to the protein kinase superfamily. Ser/Thr protein kinase family. Monomer, homo- and heterodimer. Interacts with KAPP, CDC48A, GRF6 or GRF7, SERK2, BRI1 and SERK3/BAK1 to form the SERK1 signaling complex. Bind to BRI1 in a brassinolide-dependent manner. Heterodimer with PSKR1. Interacts with the EF-Tu receptor EFR and FLS2 in a specific ligand-induced manner. Interacts with ERECTA in a EPF2-induced manner. Interacts with ERL1 in a EPF1-induced manner. Interacts with TMM. In the presence of the signal peptide RGF1, interacts with RGI1/RGFR4/RCH2, RGI2/RGFR3/RCH1, RGI3/RGFR1, RGI4/RGFR2/SKM2 and RGI5/RGFR5. Mg(2+) serves as cofactor. In terms of processing, glycosylated. Important for targeting to the plasma membrane. Intermolecular autophosphorylation. The catalytic activity of SERK1 depends on the presence of a phosphorylated Thr residue in SERK1. The phosphorylation is induced by brassinosteroids. Transphosphorylation by BRI1 occurs only on Ser-299 and Thr-462. Dephosphorylation of threonine residues by the kinase-associated protein phosphatase (KAPP) is involved in SERK1 endocytosis. As to expression, expressed in flowers, tapetum, developing microspores, all cells of the embryo sac, provascular strands and developing vascular bundles. Low expression in adult vascular tissue. Detected in root meristem.

It localises to the cell membrane. Its subcellular location is the endoplasmic reticulum membrane. It carries out the reaction L-seryl-[protein] + ATP = O-phospho-L-seryl-[protein] + ADP + H(+). The enzyme catalyses L-threonyl-[protein] + ATP = O-phospho-L-threonyl-[protein] + ADP + H(+). It catalyses the reaction L-tyrosyl-[protein] + ATP = O-phospho-L-tyrosyl-[protein] + ADP + H(+). Its activity is regulated as follows. Inhibited by manganese. In terms of biological role, dual specificity kinase acting on both serine/threonine- and tyrosine-containing substrates. Phosphorylates BRI1 on 'Ser-887' and CDC48 on at least one threonine residue and on 'Ser-41'. Confers embryogenic competence. Acts redundantly with SERK2 as a control point for sporophytic development controlling male gametophyte production. Involved in the brassinolide signaling pathway. Probably required during small peptide (e.g. RGF1) signaling. Involved in the perception of phytosulfokine and subsequent signal transduction. Acts as a RLK5 coreceptor and promotes high-affinity IDA sensing, thus being a positive regulator of floral abscission. The polypeptide is Somatic embryogenesis receptor kinase 1 (Arabidopsis thaliana (Mouse-ear cress)).